A 1993-amino-acid chain; its full sequence is [F-actin]-monooxygenase MICAL3 (1993 aa).

The interval 2–494 (EERKQETTNQ…RHLYDSGETK (493 aa)) is monooxygenase domain. Residues Cys-97, 116 to 118 (EKR), 123 to 125 (RNN), Phe-183, Tyr-298, and Asp-398 contribute to the FAD site. The region spanning 518-624 (VARSSKLLGW…YLTQFYEMFK (107 aa)) is the Calponin-homology (CH) domain. Ser-649 is modified (phosphoserine). The interval 658–704 (GQTISRKRSPKDKKEKDSDGAGKRRKTSQSEEEEPPRSYKGERPTLV) is disordered. Positions 669–679 (DKKEKDSDGAG) are enriched in basic and acidic residues. Residues Ser-685 and Ser-687 each carry the phosphoserine modification. Residues 762–824 (DTCYFCQKRV…KPHYCYRLSG (63 aa)) enclose the LIM zinc-binding domain. Residues Cys-764, Cys-767, His-785, Cys-788, Cys-791, Cys-794, Cys-814, and His-817 each coordinate Zn(2+). The segment at 854 to 886 (NGLASVAASSAERSPGTSMNGLEEPSIAKRLRG) is disordered. A compositionally biased stretch (polar residues) spans 860-873 (AASSAERSPGTSMN). Phosphothreonine is present on Thr-887. Disordered stretches follow at residues 905-1023 (ELEE…RLQQ), 1039-1309 (WTHI…LSGP), 1332-1546 (IRRS…FFTP), and 1559-1837 (KENG…EELK). The span at 938–951 (SEMEEEEEEDDEDD) shows a compositional bias: acidic residues. Over residues 975-988 (GRSEEELEASKNFE) the composition is skewed to basic and acidic residues. At Ser-977 the chain carries Phosphoserine. Residues 989–1014 (PEEEEEEEEYEEEDEEYEEEEEEESS) show a composition bias toward acidic residues. Positions 1039 to 1051 (WTHIREREAEERM) are enriched in basic and acidic residues. The segment covering 1065–1090 (DEDDLEEDADSEPAETEGEAAEDGDP) has biased composition (acidic residues). Positions 1111–1148 (EAEHRLQSQAKVKAELELRVSENEEEKPSDAPKQEERG) are enriched in basic and acidic residues. Phosphoserine occurs at positions 1131 and 1187. Positions 1199–1212 (LREKPKAEVPEEQK) are enriched in basic and acidic residues. The span at 1230 to 1239 (SPTSPTSLQP) shows a compositional bias: polar residues. The span at 1245–1255 (PPTPPTPPPTQ) shows a compositional bias: pro residues. Residues 1257 to 1275 (PICSQPQPSSDASIPSPTK) show a composition bias toward polar residues. At Ser-1272 the chain carries Phosphoserine. Thr-1274 carries the phosphothreonine modification. 2 positions are modified to phosphoserine: Ser-1276 and Ser-1335. The residue at position 1339 (Thr-1339) is a Phosphothreonine. Phosphoserine occurs at positions 1369 and 1382. The span at 1405–1420 (PSDKELRSSQEERRDL) shows a compositional bias: basic and acidic residues. A compositionally biased stretch (low complexity) spans 1421–1433 (SSSSGLGLHDSSS). Ser-1431 bears the Phosphoserine mark. A compositionally biased stretch (polar residues) spans 1434–1452 (NMKTLGSQSFNTSDSTMLT). Position 1452 is a phosphothreonine (Thr-1452). Residues 1454–1465 (PSSPPPPPPPNE) show a composition bias toward pro residues. The span at 1516–1530 (SVDEIPFADDVEDTY) shows a compositional bias: acidic residues. Basic and acidic residues predominate over residues 1584–1600 (EAKELAEERMRAREKSV). A compositionally biased stretch (polar residues) spans 1623-1633 (SSRSHTAQSQG). Ser-1640 bears the Phosphoserine mark. Residues 1665–1685 (SPPSDSGGPDGSVTSSEGSSG) show a composition bias toward low complexity. Positions 1686-1704 (KSKKRSSLFSPRRNKKEKK) are enriched in basic residues. Phosphoserine is present on residues Ser-1692 and Ser-1695. Polar residues predominate over residues 1754–1763 (TPSSGATVDS). Over residues 1795 to 1811 (ILERSSQKSKREPRTYT) the composition is skewed to basic and acidic residues. A coiled-coil region spans residues 1817–1983 (AKLTRRVQKA…EEDKDLEAAM (167 aa)). Positions 1819–1830 (LTRRVQKAARRQ) are enriched in basic residues. In terms of domain architecture, bMERB spans 1832–1981 (KQEELKRLHR…EKEEDKDLEA (150 aa)). Ser-1903 carries the phosphoserine modification.

Belongs to the Mical family. In terms of assembly, interacts with RAB1B, RAB8A, RAB10, RAB13 and RAB15 (in their GTP-bound forms); binding to RAB1B is of low affinity compared to other Rab proteins; at least in case of RAB8A can bind 2 molecules of RAB8A simultaneously through a high and a low affinity binding site, respectively. Interacts with ERC1 and RAB8A; may bridge ERC1 with RAB8A. Interacts with KIF23 and ERC1; enhances the interaction between KIF23 and ERC1. Interacts with NINL. It depends on FAD as a cofactor.

Its subcellular location is the cytoplasm. It is found in the cell cortex. The protein localises to the cytoskeleton. It localises to the nucleus. The protein resides in the midbody. Its subcellular location is the spindle. It is found in the cilium basal body. The enzyme catalyses L-methionyl-[F-actin] + NADPH + O2 + H(+) = L-methionyl-(R)-S-oxide-[F-actin] + NADP(+) + H2O. Its function is as follows. Monooxygenase that promotes depolymerization of F-actin by mediating oxidation of specific methionine residues on actin to form methionine-sulfoxide, resulting in actin filament disassembly and preventing repolymerization. In the absence of actin, it also functions as a NADPH oxidase producing H(2)O(2). Seems to act as Rab effector protein and play a role in vesicle trafficking. Involved in exocytic vesicles tethering and fusion: the monooxygenase activity is required for this process and implicates RAB8A associated with exocytotic vesicles. Required for cytokinesis. Contributes to stabilization and/or maturation of the intercellular bridge independently of its monooxygenase activity. Promotes recruitment of Rab8 and ERC1 to the intercellular bridge, and together these proteins are proposed to function in timely abscission. This Mus musculus (Mouse) protein is [F-actin]-monooxygenase MICAL3 (Mical3).